A 453-amino-acid polypeptide reads, in one-letter code: Fibrinogen gamma chain (453 aa).

The N-terminal stretch at 1-26 is a signal peptide; the sequence is MSWSLHPRNLILYFYALLFLSSTCVA. Residue serine 68 is modified to Phosphoserine; by FAM20C. N-linked (GlcNAc...) (complex) asparagine glycosylation occurs at asparagine 78. The Fibrinogen C-terminal domain maps to 170–416; it reads QIHDITGKDC…KTTMKIIPFN (247 aa). Residues cysteine 179 and cysteine 208 are joined by a disulfide bond. A glycan (N-linked (GlcNAc...) asparagine; in variant Asahi) is linked at asparagine 334. Ca(2+) contacts are provided by aspartate 344, aspartate 346, phenylalanine 348, and glycine 350. Cysteine 352 and cysteine 365 are disulfide-bonded. The interval 400–422 is gamma-chain polymerization, binding amino end of another fibrin alpha chain; the sequence is TRWYSMKKTTMKIIPFNRLTIGE. The interval 423–437 is platelet aggregation and Staphylococcus clumping; it reads GQQHHLGGAKQVRPE. Glutamine 424 participates in a covalent cross-link: Isoglutamyl lysine isopeptide (Gln-Lys) (interchain with K-432). The interval 424 to 453 is disordered; the sequence is QQHHLGGAKQVRPEHPAETEYDSLYPEDDL. Residue lysine 432 forms an Isoglutamyl lysine isopeptide (Lys-Gln) (interchain with Q-424) linkage. The segment covering 442–453 has biased composition (acidic residues); sequence TEYDSLYPEDDL. A sulfotyrosine mark is found at tyrosine 444 and tyrosine 448.

In terms of assembly, heterohexamer; disulfide linked. Contains 2 sets of 3 non-identical chains (alpha, beta and gamma). The 2 heterotrimers are in head to head conformation with the N-termini in a small central domain. Conversion of fibrinogen to fibrin is triggered by thrombin, which cleaves fibrinopeptides A and B from alpha and beta chains, and thus exposes the N-terminal polymerization sites responsible for the formation of the soft clot. The soft clot is converted into the hard clot by factor XIIIA which catalyzes the epsilon-(gamma-glutamyl)lysine cross-linking between gamma chains (stronger) and between alpha chains (weaker) of different monomers. Post-translationally, sulfation of C-terminal tyrosines increases affinity for thrombin. As to expression, detected in blood plasma (at protein level).

It localises to the secreted. In terms of biological role, together with fibrinogen alpha (FGA) and fibrinogen beta (FGB), polymerizes to form an insoluble fibrin matrix. Has a major function in hemostasis as one of the primary components of blood clots. In addition, functions during the early stages of wound repair to stabilize the lesion and guide cell migration during re-epithelialization. Was originally thought to be essential for platelet aggregation, based on in vitro studies using anticoagulated blood. However, subsequent studies have shown that it is not absolutely required for thrombus formation in vivo. Enhances expression of SELP in activated platelets via an ITGB3-dependent pathway. Maternal fibrinogen is essential for successful pregnancy. Fibrin deposition is also associated with infection, where it protects against IFNG-mediated hemorrhage. May also facilitate the antibacterial immune response via both innate and T-cell mediated pathways. This Homo sapiens (Human) protein is Fibrinogen gamma chain (FGG).